A 64-amino-acid chain; its full sequence is Large ribosomal subunit protein bL35 (64 aa).

This sequence belongs to the bacterial ribosomal protein bL35 family.

This chain is Large ribosomal subunit protein bL35, found in Desulforudis audaxviator (strain MP104C).